A 161-amino-acid chain; its full sequence is Sterile alpha motif domain-containing protein 12 (161 aa).

The segment at 44-64 (QKVPDQKGTPKRLQGEAETAK) is disordered. Residues 77–143 (WTQQDVCKWL…LQQVLQLKVR (67 aa)) form the SAM domain.

The polypeptide is Sterile alpha motif domain-containing protein 12 (Samd12) (Mus musculus (Mouse)).